The sequence spans 142 residues: Hemoglobin subunit alpha (142 aa).

A Globin domain is found at 2 to 142; the sequence is HLTADDKKHI…VSNVLTSKYR (141 aa). Heme b is bound by residues His59 and His88.

The protein belongs to the globin family. In terms of assembly, heterotetramer of two alpha chains and two beta chains. As to expression, red blood cells.

Involved in oxygen transport from the lung to the various peripheral tissues. The sequence is that of Hemoglobin subunit alpha (hba-A) from Xenopus tropicalis (Western clawed frog).